Consider the following 510-residue polypeptide: G-protein coupled receptor dmsr-1 (510 aa).

The Extracellular segment spans residues 1 to 35 (MEFTECKTTFIHLPDKSFLYDVFVSVYNFYHPIHA). Residues 36–56 (YLSIFLCVLGTIANFCNIVVL) form a helical membrane-spanning segment. Topologically, residues 57–64 (TRRTMRTP) are cytoplasmic. Residues 65–85 (VNMILTAMASCDTVVLFSNLI) traverse the membrane as a helical segment. At 86-107 (YTTHYSFVAFKFCHPKHWSYSW) the chain is on the extracellular side. Residues 108 to 128 (ALFLIAHAHLSLVAHSSSVWL) traverse the membrane as a helical segment. Topologically, residues 129 to 155 (SVMLALVRYVTLRSRGNMGGMQVTLRH) are cytoplasmic. The helical transmembrane segment at 156–176 (SYYAVAVTVSLVAVLNAPNFL) threads the bilayer. Residues 177–223 (NYKINEQPLNETCTDLDPMFWNSPAYLPGIADIAKANSCLVFRLSYW) lie on the Extracellular side of the membrane. Asn186 is a glycosylation site (N-linked (GlcNAc...) asparagine). Residues 224–244 (ISGMVFKVLPCALLSLFVWLL) traverse the membrane as a helical segment. Residues 245–307 (LRILREVREN…GERVDRTTHM (63 aa)) are Cytoplasmic-facing. A helical membrane pass occupies residues 308–328 (LLAIVAVMLVTELPQGIMAVL). Topologically, residues 329-343 (SGMCSEEFRIYIYNN) are extracellular. Residues 344-364 (LGDILDLFSLCGSCCSFIIYC) traverse the membrane as a helical segment. The Cytoplasmic segment spans residues 365–510 (SMSGQFRNEF…DGIRGHFQNI (146 aa)). The interval 452 to 510 (GCDSITPCSPMPTSFPSSPLPPIRSGEDESTDETSHLLNSSGPNSTASADGIRGHFQNI) is disordered. The span at 487–499 (HLLNSSGPNSTAS) shows a compositional bias: polar residues.

Belongs to the G-protein coupled receptor 1 family. In terms of tissue distribution, expressed in head neurons including the RID neuron and the paired AIY neurons, and in tail neurons including the paired PHA and PHB neurons. Not expressed in AVE and AVA neurons.

It is found in the cell membrane. In terms of biological role, G-protein coupled receptor. G-protein coupled receptor for flp-13 RFamide neuropeptides in vitro. Upon activation by flp-13 RFamide neuropeptides, promotes sleep in response to cellular stress also known as stress-induced sleep (SIS), probably by inhibiting the activity of wake-promoting neurons. The sequence is that of G-protein coupled receptor dmsr-1 from Caenorhabditis elegans.